The sequence spans 214 residues: Small ribosomal subunit protein uS3c (214 aa).

The region spanning 39 to 111 (IRTYLNKLAK…QLTINIIEVE (73 aa)) is the KH type-2 domain.

The protein belongs to the universal ribosomal protein uS3 family. As to quaternary structure, part of the 30S ribosomal subunit.

Its subcellular location is the plastid. It is found in the chloroplast. The protein is Small ribosomal subunit protein uS3c (rps3) of Trieres chinensis (Marine centric diatom).